The chain runs to 352 residues: Extracellular minor metalloprotease (352 aa).

2 disordered regions span residues 41-86 (GNKP…QPRR) and 144-164 (TARS…ELTH). A compositionally biased stretch (basic and acidic residues) spans 48 to 57 (PTEKNARAGE). 2 stretches are compositionally biased toward low complexity: residues 71-85 (ARQT…QQPR) and 144-156 (TARS…SPST). A Zn(2+)-binding site is contributed by His160. Glu161 is an active-site residue. His164 and Glu184 together coordinate Zn(2+). The active-site Proton donor is His262. Positions 303 to 325 (TPTSDHLRPRHGETRAGLRTKRG) are disordered. Residues 304–325 (PTSDHLRPRHGETRAGLRTKRG) show a composition bias toward basic and acidic residues.

The protein belongs to the peptidase M4 family. It depends on Zn(2+) as a cofactor.

Its subcellular location is the secreted. In Serratia marcescens (strain ATCC 21074 / E-15), this protein is Extracellular minor metalloprotease (smp).